The chain runs to 131 residues: Ribosome-binding factor A (131 aa).

The protein belongs to the RbfA family. As to quaternary structure, monomer. Binds 30S ribosomal subunits, but not 50S ribosomal subunits or 70S ribosomes.

It is found in the cytoplasm. In terms of biological role, one of several proteins that assist in the late maturation steps of the functional core of the 30S ribosomal subunit. Associates with free 30S ribosomal subunits (but not with 30S subunits that are part of 70S ribosomes or polysomes). Required for efficient processing of 16S rRNA. May interact with the 5'-terminal helix region of 16S rRNA. The chain is Ribosome-binding factor A from Picosynechococcus sp. (strain ATCC 27264 / PCC 7002 / PR-6) (Agmenellum quadruplicatum).